Here is a 123-residue protein sequence, read N- to C-terminus: Fluoride-specific ion channel FluC (123 aa).

4 helical membrane passes run 1-21, 32-52, 64-84, and 99-119; these read MLEI…RYLM, ILSL…GLVI, IGLL…SFSY, and FGYT…GIYL. Na(+)-binding residues include Gly74 and Thr77.

It belongs to the fluoride channel Fluc/FEX (TC 1.A.43) family.

Its subcellular location is the cell inner membrane. The enzyme catalyses fluoride(in) = fluoride(out). Its activity is regulated as follows. Na(+) is not transported, but it plays an essential structural role and its presence is essential for fluoride channel function. Functionally, fluoride-specific ion channel. Important for reducing fluoride concentration in the cell, thus reducing its toxicity. This is Fluoride-specific ion channel FluC from Gloeothece citriformis (strain PCC 7424) (Cyanothece sp. (strain PCC 7424)).